The sequence spans 548 residues: Splicing factor U2af large subunit B (548 aa).

Residues 1-82 (MADDHAAAAD…DRDRDRDKDR (82 aa)) are compositionally biased toward basic and acidic residues. The tract at residues 1 to 156 (MADDHAAAAD…SKRVSGFDMA (156 aa)) is disordered. The span at 83–93 (DRHHRHHRERR) shows a compositional bias: basic residues. Positions 94–120 (EHRDRSDDHDRHRSRDSERRRDHERDG) are enriched in basic and acidic residues. Residues 121 to 149 (RRRHRSRSRSRSRGRDRRSRSRSRSKSKR) are compositionally biased toward basic residues. 3 RRM domains span residues 214–297 (RRVY…RPTD), 334–412 (DRIF…RANQ), and 453–539 (QVVS…YPEN).

It belongs to the splicing factor SR family.

It localises to the nucleus. Necessary for the splicing of pre-mRNA. This is Splicing factor U2af large subunit B (U2AF65B) from Oryza sativa subsp. japonica (Rice).